Consider the following 345-residue polypeptide: NADH-quinone oxidoreductase subunit H (345 aa).

Helical transmembrane passes span Ala9 to Ala29, Val82 to Val102, Val108 to Gly128, Met154 to Val174, Leu183 to Phe203, Tyr241 to Val261, Leu282 to Val302, and Ile325 to Leu345.

This sequence belongs to the complex I subunit 1 family. NDH-1 is composed of 14 different subunits. Subunits NuoA, H, J, K, L, M, N constitute the membrane sector of the complex.

The protein localises to the cell inner membrane. It catalyses the reaction a quinone + NADH + 5 H(+)(in) = a quinol + NAD(+) + 4 H(+)(out). NDH-1 shuttles electrons from NADH, via FMN and iron-sulfur (Fe-S) centers, to quinones in the respiratory chain. The immediate electron acceptor for the enzyme in this species is believed to be ubiquinone. Couples the redox reaction to proton translocation (for every two electrons transferred, four hydrogen ions are translocated across the cytoplasmic membrane), and thus conserves the redox energy in a proton gradient. This subunit may bind ubiquinone. This chain is NADH-quinone oxidoreductase subunit H, found in Salinibacter ruber (strain DSM 13855 / M31).